The following is a 635-amino-acid chain: tRNA uridine 5-carboxymethylaminomethyl modification enzyme MnmG (635 aa).

Position 19–24 (19–24 (GAGHAG)) interacts with FAD. 280 to 294 (GPRYCPSIEDKIVRF) lines the NAD(+) pocket.

The protein belongs to the MnmG family. As to quaternary structure, homodimer. Heterotetramer of two MnmE and two MnmG subunits. Requires FAD as cofactor.

It localises to the cytoplasm. Its function is as follows. NAD-binding protein involved in the addition of a carboxymethylaminomethyl (cmnm) group at the wobble position (U34) of certain tRNAs, forming tRNA-cmnm(5)s(2)U34. The sequence is that of tRNA uridine 5-carboxymethylaminomethyl modification enzyme MnmG from Synechocystis sp. (strain ATCC 27184 / PCC 6803 / Kazusa).